The chain runs to 229 residues: Large ribosomal subunit protein uL1 (229 aa).

The protein belongs to the universal ribosomal protein uL1 family. In terms of assembly, part of the 50S ribosomal subunit.

Binds directly to 23S rRNA. The L1 stalk is quite mobile in the ribosome, and is involved in E site tRNA release. Functionally, protein L1 is also a translational repressor protein, it controls the translation of the L11 operon by binding to its mRNA. The chain is Large ribosomal subunit protein uL1 from Clostridium tetani (strain Massachusetts / E88).